Reading from the N-terminus, the 540-residue chain is Type II methyltransferase M.AccI (540 aa).

It belongs to the N(4)/N(6)-methyltransferase family. In terms of assembly, monomer.

It catalyses the reaction a 2'-deoxyadenosine in DNA + S-adenosyl-L-methionine = an N(6)-methyl-2'-deoxyadenosine in DNA + S-adenosyl-L-homocysteine + H(+). A gamma subtype methylase, recognizes the double-stranded sequence 5'-GTMKAC-3', methylates A-5 on both strands, and protects the DNA from cleavage by the AccI endonuclease. The polypeptide is Type II methyltransferase M.AccI (accIM) (Acinetobacter calcoaceticus).